We begin with the raw amino-acid sequence, 286 residues long: L-ribulose 3-epimerase (286 aa).

Histidine 12, serine 69, glutamate 152, and glutamate 158 together coordinate D-allulose. Residues histidine 12, serine 69, glutamate 152, and glutamate 158 each coordinate D-fructose. Catalysis depends on glutamate 152, which acts as the Proton donor/acceptor. Glutamate 152 lines the Mn(2+) pocket. Aspartate 185 provides a ligand contact to Mn(2+). D-allulose-binding residues include histidine 188, histidine 211, arginine 217, and glutamate 246. Histidine 188, histidine 211, arginine 217, and glutamate 246 together coordinate D-fructose. A Mn(2+)-binding site is contributed by histidine 211. Catalysis depends on glutamate 246, which acts as the Proton donor/acceptor. Glutamate 246 provides a ligand contact to Mn(2+).

The protein belongs to the hyi family. In terms of assembly, homodimer. Mn(2+) is required as a cofactor.

It catalyses the reaction L-ribulose = L-xylulose. It carries out the reaction D-ribulose = D-xylulose. The enzyme catalyses D-allulose = keto-D-fructose. The catalysed reaction is keto-L-tagatose = keto-L-sorbose. It catalyses the reaction keto-D-tagatose = keto-D-sorbose. Catalyzes the epimerization of various ketoses at the C(3) position. Exhibits the highest enzymatic activity toward L-ribulose, followed by D-ribulose, D-allulose and D-fructose. Shows lower activity with L-xylulose, L-tagatose, D-xylulose, D-tagatose, L-sorbose, D-sorbose, and weak activity with L-allulose and L-fructose. The protein is L-ribulose 3-epimerase of Methylomonas sp. (strain DH-1).